The chain runs to 103 residues: Large ribosomal subunit protein bL21 (103 aa).

It belongs to the bacterial ribosomal protein bL21 family. As to quaternary structure, part of the 50S ribosomal subunit. Contacts protein L20.

In terms of biological role, this protein binds to 23S rRNA in the presence of protein L20. This is Large ribosomal subunit protein bL21 from Heliobacterium modesticaldum (strain ATCC 51547 / Ice1).